We begin with the raw amino-acid sequence, 73 residues long: Copper chaperone ATX1 (73 aa).

The HMA domain occupies 4-68; sequence IKHYQFNVVM…KIKKTGKEVR (65 aa). Cu(+)-binding residues include Cys15 and Cys18.

The protein belongs to the ATX1 family. In terms of assembly, homodimer. Interacts with CCC2 via the copper anion.

It is found in the cytoplasm. Tetrathiomolybdate directly and reversibly down-regulates copper delivery to secreted metalloenzymes. Copper homeostasis factor that specifically transports copper to the secretory pathway for incorporation into copper enzymes destined for the cell surface or extracellular milieu. Shuttles copper to the transport ATPase CCC2 on a post-Golgi vesicle for eventual targeting to the cell-surface high-affinity iron uptake protein FET3. Protects against oxygen toxicity. In Saccharomyces cerevisiae (strain ATCC 204508 / S288c) (Baker's yeast), this protein is Copper chaperone ATX1.